We begin with the raw amino-acid sequence, 60 residues long: Mastoparan (60 aa).

The signal sequence occupies residues 1–27; it reads MKDTILILFTAFIALLGFFGMSAEALA. 4 AXPX repeats span residues 27-30, 31-34, 35-38, and 41-44; these read ADPL, ADPS, AGPN, and ADPE. Residues 28 to 45 constitute a propeptide that is removed on maturation; the sequence is DPLADPSAGPNAEADPEA. Leu59 bears the Leucine amide mark.

It belongs to the MCD family. Mastoparan subfamily. Expressed by the venom gland.

It is found in the secreted. It localises to the target cell membrane. Its function is as follows. Mast cell degranulating peptide. Its mast cell degranulation activity may be related to the activation of G-protein coupled receptors in mast cells as well as interaction with other proteins located in cell endosomal membranes in the mast cells. Has a membranolytic activity on human glioblastoma multiforme cells (brain tumor cells) that leads to cell necrosis. The protein is Mastoparan of Vespa orientalis (Oriental hornet).